Consider the following 1018-residue polypeptide: Calcium-transporting ATPase sarcoplasmic/endoplasmic reticulum type (1018 aa).

The Cytoplasmic segment spans residues 1 to 48 (MEDGHSKTVDEVLSHFRVDPERGLSLDQVKEYQKKYGPNELPAEEGKT). Residues 49 to 69 (LWQLVLEQFDDLLVKILLLAA) form a helical membrane-spanning segment. Over 70–88 (IISFVLALFEEHEGVEAFV) the chain is Lumenal. A helical transmembrane segment spans residues 89 to 109 (EPFVILLILIANAVVGVWQER). Topologically, residues 110-252 (NAESAIEALK…EIKTPLQQKL (143 aa)) are cytoplasmic. The helical transmembrane segment at 253–272 (DEFGEQLSKVISLICVAVWA) threads the bilayer. Topologically, residues 273 to 294 (INIGHFNDPAHGGSWIKGAVYY) are lumenal. Residues 295-312 (FKIAVALAVAAIPEGLPA) traverse the membrane as a helical segment. Residues Val-303, Ala-304, Ile-306, and Glu-308 each coordinate Ca(2+). Residues 313–756 (VITTCLALGT…EEGRAIYNNM (444 aa)) are Cytoplasmic-facing. Asp-350 (4-aspartylphosphate intermediate) is an active-site residue. The Mg(2+) site is built by Asp-702 and Asp-706. A helical transmembrane segment spans residues 757–776 (KQFIRYLISSNIGEVVSIFL). Ca(2+) is bound by residues Asn-767 and Glu-770. Residues 777-786 (TAALGLPEAL) are Lumenal-facing. Residues 787–807 (IPVQLLWVNLVTDGLPATALG) form a helical membrane-spanning segment. Positions 795, 798, and 799 each coordinate Ca(2+). Residues 808–827 (FNPPDLDIMTKPPRKADEGL) are Cytoplasmic-facing. The chain crosses the membrane as a helical span at residues 828 to 850 (ISGWLFFRYMAIGGYVGCATVGG). Over 851–896 (AAWWFMFSETGPQLSYWQLTHHLSCLGGGEEFKGIDCKIFNDPHPM) the chain is Lumenal. The helical transmembrane segment at 897–916 (TMALSVLVTIEMLNAMNSLS) threads the bilayer. Ca(2+) is bound at residue Glu-907. The Cytoplasmic portion of the chain corresponds to 917–929 (ENQSLVQMPPWCN). A helical transmembrane segment spans residues 930 to 948 (IWLIASMCLSFALHFVILY). Residues 949 to 963 (VDVLSTVFQVTPLDG) are Lumenal-facing. A helical membrane pass occupies residues 964–984 (NEWMTVMKFSLPVVLLDEILK). Residues 985 to 1018 (FVARRISDGESYIKNMHGLVLAWAVFFAYIIWGP) are Cytoplasmic-facing.

It belongs to the cation transport ATPase (P-type) (TC 3.A.3) family.

It is found in the endoplasmic reticulum membrane. It localises to the sarcoplasmic reticulum membrane. The catalysed reaction is Ca(2+)(in) + ATP + H2O = Ca(2+)(out) + ADP + phosphate + H(+). Functionally, this magnesium-dependent enzyme catalyzes the hydrolysis of ATP coupled with the transport of calcium. The sequence is that of Calcium-transporting ATPase sarcoplasmic/endoplasmic reticulum type from Anopheles gambiae (African malaria mosquito).